Consider the following 963-residue polypeptide: Low-density lipoprotein receptor-related protein 8 (963 aa).

Residues 1 to 32 form the signal peptide; that stretch reads MGLPEPGPLRLLALLLLLLLLLLLQLQHLAAA. Topologically, residues 42–826 are extracellular; sequence GPAKDCEKDQ…SKMGSTVTAA (785 aa). LDL-receptor class A domains are found at residues 46–82, 85–123, 126–164, 166–202, 205–246, 258–295, and 298–334; these read DCEK…DDCP, TCAD…ATCT, VCPA…AGCA, LCAP…RGCA, ACGP…ELCG, ACAT…ADCP, and TCRG…AGCL. 27 disulfide bridges follow: cysteine 47–cysteine 59, cysteine 54–cysteine 72, cysteine 66–cysteine 81, cysteine 86–cysteine 98, cysteine 93–cysteine 111, cysteine 105–cysteine 122, cysteine 127–cysteine 141, cysteine 134–cysteine 154, cysteine 148–cysteine 163, cysteine 167–cysteine 179, cysteine 174–cysteine 192, cysteine 186–cysteine 201, cysteine 206–cysteine 221, cysteine 213–cysteine 234, cysteine 228–cysteine 245, cysteine 259–cysteine 272, cysteine 267–cysteine 285, cysteine 279–cysteine 294, cysteine 299–cysteine 311, cysteine 306–cysteine 324, cysteine 318–cysteine 333, cysteine 340–cysteine 351, cysteine 347–cysteine 360, cysteine 362–cysteine 374, cysteine 380–cysteine 390, cysteine 386–cysteine 399, and cysteine 401–cysteine 414. Tryptophan 64, aspartate 67, aspartate 69, aspartate 71, aspartate 77, and glutamate 78 together coordinate Ca(2+). Asparagine 176 is a glycosylation site (N-linked (GlcNAc...) asparagine). The region spanning 336–375 is the EGF-like 1 domain; that stretch reads GLNECLHNNGGCSHICTDLKIGFECTCPAGFQLLDQKTCG. In terms of domain architecture, EGF-like 2; calcium-binding spans 376-415; that stretch reads DIDECKDPDACSQICVNYKGYFKCECYPGYEMDLLTKNCK. Asparagine 441 is a glycosylation site (N-linked (GlcNAc...) asparagine). LDL-receptor class B repeat units follow at residues 462–508, 509–551, 552–595, 596–639, and 640–681; these read NRIY…DWVH, KHIY…DPLR, GFMY…DLLS, QRLY…VFED, and KVFW…FHEL. Residues asparagine 518 and asparagine 538 are each glycosylated (N-linked (GlcNAc...) asparagine). Residues 740-798 are clustered O-linked oligosaccharides; sequence STSTTTLASTMTRTVPATTRAPGTTVHRSTYQNHSTETPSLTAAVPSSVSVPRAPSISP. The interval 754–815 is disordered; it reads VPATTRAPGT…SNHSQHYANE (62 aa). Polar residues predominate over residues 765 to 777; sequence VHRSTYQNHSTET. Asparagine 772 carries an N-linked (GlcNAc...) asparagine glycan. Residues 778-799 show a composition bias toward low complexity; it reads PSLTAAVPSSVSVPRAPSISPS. Residues 800-812 are compositionally biased toward polar residues; sequence TLSPATSNHSQHY. A glycan (N-linked (GlcNAc...) asparagine) is linked at asparagine 807. Residues 827 to 847 traverse the membrane as a helical segment; sequence VIGIIVPIVVIALLCMSGYLI. Residues 848-963 lie on the Cytoplasmic side of the membrane; the sequence is WRNWKRKNTK…ALSLEDDGLP (116 aa).

This sequence belongs to the LDLR family. In terms of assembly, homooligomer. Interacts with VLDLR. Reelin associates with two or more receptor molecules. Interacts with DAB1 and JNK-interacting proteins. Interacts with SNX17. Interacts with PCSK9. Interacts with MDK; this interaction is calcium dependent. Interacts with CLU. As to quaternary structure, (Microbial infection) Interacts with Semliki Forest virus E2-E1 heterodimer; this interaction mediates viral entry to host cell. (Microbial infection) Interacts (via class A repeats) with Eastern equine encephalitis virus spike glycoprotein E2; this interaction mediates viral entry into host cell. Post-translationally, O-glycosylated. Some alternatively spliced isoforms lack the O-linked sugar domain. Undergoes sequential, furin and gamma-secretase dependent, proteolytic processing, resulting in the extracellular release of the entire ligand-binding domain as a soluble polypeptide and in the intracellular domain (ICD) release into the cytoplasm. The gamma-secretase-dependent proteolytical processing occurs after the bulk of the extracellular domain has been shed, in a furin-dependent manner, in alternatively spliced isoforms carrying the furin cleavage site. Hypoglycosylation (mainly hypo-O-glycosylation) leads to increased extracellular cleavage, which in turn results in accelerating release of the intracellular domain (ICD) by the gamma-secretase. The resulting receptor fragment is able to inhibit Reelin signaling and in particular the Reelin-induced DAB1 phosphorylation. In terms of processing, tyrosine phosphorylated upon apoE binding. Post-translationally, ubiquitinated by MYLIP leading to degradation. Expressed mainly in brain and placenta. Also expressed in platelets and megakaryocytic cells. Not expressed in the liver.

It is found in the cell membrane. Its subcellular location is the secreted. Cell surface receptor for Reelin (RELN) and apolipoprotein E (apoE)-containing ligands. LRP8 participates in transmitting the extracellular Reelin signal to intracellular signaling processes, by binding to DAB1 on its cytoplasmic tail. Reelin acts via both the VLDL receptor (VLDLR) and LRP8 to regulate DAB1 tyrosine phosphorylation and microtubule function in neurons. LRP8 has higher affinity for Reelin than VLDLR. LRP8 is thus a key component of the Reelin pathway which governs neuronal layering of the forebrain during embryonic brain development. Binds the endoplasmic reticulum resident receptor-associated protein (RAP). Binds dimers of beta 2-glycoprotein I and may be involved in the suppression of platelet aggregation in the vasculature. Highly expressed in the initial segment of the epididymis, where it affects the functional expression of clusterin and phospholipid hydroperoxide glutathione peroxidase (PHGPx), two proteins required for sperm maturation. May also function as an endocytic receptor. Not required for endocytic uptake of SEPP1 in the kidney which is mediated by LRP2. Together with its ligand, apolipoprotein E (apoE), may indirectly play a role in the suppression of the innate immune response by controlling the survival of myeloid-derived suppressor cells. Its function is as follows. (Microbial infection) Acts as a receptor for Semliki Forest virus. This chain is Low-density lipoprotein receptor-related protein 8 (LRP8), found in Homo sapiens (Human).